Consider the following 185-residue polypeptide: Peptidyl-tRNA hydrolase (185 aa).

Residue Tyr14 participates in tRNA binding. The Proton acceptor role is filled by His19. The tRNA site is built by Phe64, Asn66, and Asn112.

It belongs to the PTH family. In terms of assembly, monomer.

The protein localises to the cytoplasm. It catalyses the reaction an N-acyl-L-alpha-aminoacyl-tRNA + H2O = an N-acyl-L-amino acid + a tRNA + H(+). In terms of biological role, hydrolyzes ribosome-free peptidyl-tRNAs (with 1 or more amino acids incorporated), which drop off the ribosome during protein synthesis, or as a result of ribosome stalling. Functionally, catalyzes the release of premature peptidyl moieties from peptidyl-tRNA molecules trapped in stalled 50S ribosomal subunits, and thus maintains levels of free tRNAs and 50S ribosomes. The chain is Peptidyl-tRNA hydrolase from Lacticaseibacillus paracasei (strain ATCC 334 / BCRC 17002 / CCUG 31169 / CIP 107868 / KCTC 3260 / NRRL B-441) (Lactobacillus paracasei).